A 122-amino-acid chain; its full sequence is Ubiquitin-related modifier 1 (122 aa).

Polar residues predominate over residues 33–48; it reads PSTVPADNNTSVTTKD. Positions 33–52 are disordered; it reads PSTVPADNNTSVTTKDAASP. G122 is subject to 1-thioglycine. G122 is covalently cross-linked (Glycyl lysine isopeptide (Gly-Lys) (interchain with K-? in acceptor proteins)).

Belongs to the URM1 family. In terms of processing, C-terminal thiocarboxylation occurs in 2 steps, it is first acyl-adenylated (-COAMP) via the hesA/moeB/thiF part of UBA4, then thiocarboxylated (-COSH) via the rhodanese domain of UBA4.

The protein localises to the cytoplasm. Its pathway is tRNA modification; 5-methoxycarbonylmethyl-2-thiouridine-tRNA biosynthesis. Acts as a sulfur carrier required for 2-thiolation of mcm(5)S(2)U at tRNA wobble positions of cytosolic tRNA(Lys), tRNA(Glu) and tRNA(Gln). Serves as sulfur donor in tRNA 2-thiolation reaction by being thiocarboxylated (-COSH) at its C-terminus by the MOCS3 homolog UBA4. The sulfur is then transferred to tRNA to form 2-thiolation of mcm(5)S(2)U. Prior mcm(5) tRNA modification by the elongator complex is required for 2-thiolation. Also acts as a ubiquitin-like protein (UBL) that is covalently conjugated via an isopeptide bond to lysine residues of target proteins such as AHP1. The thiocarboxylated form serves as substrate for conjugation and oxidative stress specifically induces the formation of UBL-protein conjugates. The polypeptide is Ubiquitin-related modifier 1 (Laccaria bicolor (strain S238N-H82 / ATCC MYA-4686) (Bicoloured deceiver)).